A 366-amino-acid polypeptide reads, in one-letter code: Putative [LysW]-aminoadipate semialdehyde/glutamate semialdehyde transaminase (366 aa).

Residues 90–91 and F117 contribute to the pyridoxal 5'-phosphate site; that span reads GT. Residue R120 coordinates substrate. 202 to 205 lines the pyridoxal 5'-phosphate pocket; it reads DEVQ. The residue at position 230 (K230) is an N6-(pyridoxal phosphate)lysine. S254 lines the substrate pocket. T255 contacts pyridoxal 5'-phosphate.

Belongs to the class-III pyridoxal-phosphate-dependent aminotransferase family. LysJ subfamily. As to quaternary structure, homodimer. Requires pyridoxal 5'-phosphate as cofactor.

The protein localises to the cytoplasm. The enzyme catalyses [amino-group carrier protein]-C-terminal-gamma-(L-lysyl)-L-glutamate + 2-oxoglutarate = [amino-group carrier protein]-C-terminal-N-(1-carboxy-5-oxopentan-1-yl)-L-glutamine + L-glutamate. The catalysed reaction is [amino-group carrier protein]-C-terminal-gamma-(L-ornithyl)-L-glutamate + 2-oxoglutarate = [amino-group carrier protein]-C-terminal-gamma-(L-glutamyl-5-semialdehyde)-L-glutamate + L-glutamate. It participates in amino-acid biosynthesis; L-lysine biosynthesis via AAA pathway; L-lysine from L-alpha-aminoadipate (Thermus route): step 4/5. The protein operates within amino-acid biosynthesis; L-arginine biosynthesis. Functionally, involved in both the arginine and lysine biosynthetic pathways. The protein is Putative [LysW]-aminoadipate semialdehyde/glutamate semialdehyde transaminase of Pyrococcus horikoshii (strain ATCC 700860 / DSM 12428 / JCM 9974 / NBRC 100139 / OT-3).